The primary structure comprises 184 residues: Myosin regulatory light chain 1 (184 aa).

Residues 1–29 (MFSSKENSLGAKRAPFSSNTTSSQRVAAQ) are disordered. S36 bears the Phosphoserine mark. EF-hand domains follow at residues 45-80 (SQIQELKEAFALLDKDGDGNIGREDVKTMLTSLNQD) and 114-149 (SPRNDLLEAFSTFDDTQSGKIPISTMRDALSSMGDR). Ca(2+)-binding residues include D58, D60, D62, N64, and D69.

In terms of assembly, binds to myosin II chains myo2 and myo3.

Its subcellular location is the cytoplasm. The chain is Myosin regulatory light chain 1 (rlc1) from Schizosaccharomyces pombe (strain 972 / ATCC 24843) (Fission yeast).